The chain runs to 617 residues: MEHIRTTKVEQVKLLDRFSTNNKSLTGTLYLTATHLLFIDAQQKETWILHHHIASVEKLALTTSGCPLVIQCKNFRIVHFIVPRERDCHDIYNSLLQLSKQAKYEDLYAFSYNPKQNDTERRNGWQLIDLAAEYERMGVPNANWQLSDANREYKVCETYPRELYVPRTASRPVIVGSSNFRSKGRLPVLSYCRQGTEAAICRCSQPLSGFSARCLEDEHLLQAISKANPGNRYMYVVDTRPKLNAIANRAAGKGYENEDNYSNIRFQFVGIENIHVMRSSLQKLLEVNGSKGLSVNDFYSGLESSGWLRHIKAVLDAAIFLAKAIVVENASVLVHCSDGWDRTSQVCSLGSLLLDSYYRTMKGFMVLIEKDWISFGHKFSERCGHLDGDPREVSPVFTQFLECVWHLTQQFPQAFEFNEAFLLQIHEHIHSCQFGNFLGNCQKEREELRLKEKTYSLWPFLLDDKKKYLNPLYSSKSQRLTVLEPNTASFNFKFWRNMYHQFDRTLHPRQSVLSIIMNMNEQSKQLEEDIKDLEAKIKQCKNGILTKELLHAVHPESPALKTSLCLKEPSLLPVKDTLRAIEGSSPADNRYCDYAEEFSKSEPTVVSLEYGVARMTC.

The region spanning 1-101 (MEHIRTTKVE…YNSLLQLSKQ (101 aa)) is the GRAM domain. The interaction with RAB1B stretch occupies residues 2–141 (EHIRTTKVEQ…AEYERMGVPN (140 aa)). Y108 carries the post-translational modification Phosphotyrosine. One can recognise a Myotubularin phosphatase domain in the interval 124–499 (GWQLIDLAAE…FNFKFWRNMY (376 aa)). A 1,2-diacyl-sn-glycero-3-phospho-(1D-myo-inositol-3,5-bisphosphate) contacts are provided by N248, N273, and I274. A 1,2-diacyl-sn-glycero-3-phospho-(1D-myo-inositol-3-phosphate) contacts are provided by N248, N273, and I274. The active-site Phosphocysteine intermediate is the C336. Residues S337, D338, G339, W340, D341, R342, K378, and R382 each coordinate a 1,2-diacyl-sn-glycero-3-phospho-(1D-myo-inositol-3,5-bisphosphate). The a 1,2-diacyl-sn-glycero-3-phospho-(1D-myo-inositol-3-phosphate) site is built by S337, D338, G339, W340, D341, and R342. R382 lines the a 1,2-diacyl-sn-glycero-3-phospho-(1D-myo-inositol-3-phosphate) pocket. Phosphoserine is present on residues S557, S585, and S607.

It belongs to the protein-tyrosine phosphatase family. Non-receptor class myotubularin subfamily. Homodimer. Heterodimer (via C-terminus) with MTMR9 (via C-terminus). Interacts with ALKBH4. Interacts with KCNN4. Interacts (via GRAM domain) with RAB1B (in GDP-bound form); the interaction regulates MTMR6 recruitment to the endoplasmic reticulum-Golgi intermediate compartment. In terms of tissue distribution, isoform 1: Ubiquitously expressed including in heart, brain, spleen, lung, liver, muscle, kidney and testis (at protein level). Isoform 2: Expressed in testis (at protein level).

Its subcellular location is the cytoplasm. It localises to the endoplasmic reticulum-Golgi intermediate compartment. The protein localises to the cell projection. The protein resides in the ruffle membrane. It is found in the endoplasmic reticulum. It carries out the reaction a 1,2-diacyl-sn-glycero-3-phospho-(1D-myo-inositol-3,5-bisphosphate) + H2O = a 1,2-diacyl-sn-glycero-3-phospho-(1D-myo-inositol-5-phosphate) + phosphate. The catalysed reaction is a 1,2-diacyl-sn-glycero-3-phospho-(1D-myo-inositol-3-phosphate) + H2O = a 1,2-diacyl-sn-glycero-3-phospho-(1D-myo-inositol) + phosphate. It catalyses the reaction 1,2-dioctanoyl-sn-glycero-3-phospho-(1D-myo-inositol-3,5-bisphosphate) + H2O = 1,2-dioctanoyl-sn-glycero-3-phospho-(1D-myo-inositol-5-phosphate) + phosphate. The enzyme catalyses 1,2-dioctanoyl-sn-glycero-3-phospho-(1-D-myo-inositol-3-phosphate) + H2O = 1,2-dioctanoyl-sn-glycero-3-phospho-(1D-myo-inositol) + phosphate. Its activity is regulated as follows. Allosterically activated by phosphatidylserine and/or phosphatidylinositol 4-phosphate (PtdIns(4)P), and phosphatidylinositol 5-phosphate (PtdIns(5)P). Interaction with MTMR9 increases catalytic activity towards phosphatidylinositol 3,5-bisphosphate. Functionally, lipid phosphatase that specifically dephosphorylates the D-3 position of phosphatidylinositol 3-phosphate and phosphatidylinositol 3,5-bisphosphate, generating phosphatidylinositol and phosphatidylinositol 5-phosphate. Binds with high affinity to phosphatidylinositol 3,5-bisphosphate (PtdIns(3,5)P2) but also to phosphatidylinositol 3-phosphate (PtdIns(3)P), phosphatidylinositol 4-phosphate (PtdIns(4)P), and phosphatidylinositol 5-phosphate (PtdIns(5)P), phosphatidic acid and phosphatidylserine. Negatively regulates ER-Golgi protein transport. Probably in association with MTMR9, plays a role in the late stages of macropinocytosis by dephosphorylating phosphatidylinositol 3-phosphate in membrane ruffles. Acts as a negative regulator of KCNN4/KCa3.1 channel activity in CD4(+) T-cells possibly by decreasing intracellular levels of phosphatidylinositol 3-phosphate. Negatively regulates proliferation of reactivated CD4(+) T-cells. In complex with MTMR9, negatively regulates DNA damage-induced apoptosis. The formation of the MTMR6-MTMR9 complex stabilizes both MTMR6 and MTMR9 protein levels. This chain is Phosphatidylinositol-3,5-bisphosphate 3-phosphatase MTMR6, found in Mus musculus (Mouse).